We begin with the raw amino-acid sequence, 387 residues long: MGFLFTSESVNEGHPDKLADQISDGILDACLAQDPDSKVACETATKTNMVMVFGEITTKAKVDYEAVVRQVCRDVGFISDETGLDGNKCRVLVELHDQSPDIGQGVHGMGTKSDEDIGAGDQGHMFGYATDETPELMPLTHVLATKLGHRLTVVRKDGTCPWVLPDGKTQVTIEYENEGGAMVPKRVHTILISTQHIEGVTNEKIAEDLMNEVIKKVVPEKYLDADTIFHLNPSGRFVIGGPHGDAGLTGRKIIIDTYGGWGAHGGGAFSGKDPTKVDRSGAYISRQAAKSVVAAGLARRCLFQISYAIGVAEPLSVHVDTYGTGKIPDSEILAKVKAAFDFRPGMMGKALDLKRGGNKRYQTTAAYGHFGRDEDLDIFTWEKVVPL.

Glu8 is a Mg(2+) binding site. An ATP-binding site is contributed by His14. K(+) is bound at residue Glu42. Residues Glu55 and Gln98 each contribute to the L-methionine site. Residues 166-168 (DGK), 234-237 (SGRF), Asp245, 251-252 (RK), Ala268, Lys272, and Lys276 contribute to the ATP site. Asp245 provides a ligand contact to L-methionine. Lys276 is an L-methionine binding site.

The protein belongs to the AdoMet synthase family. In terms of assembly, homotetramer. Mn(2+) is required as a cofactor. The cofactor is Mg(2+). Co(2+) serves as cofactor. It depends on K(+) as a cofactor.

It is found in the cytoplasm. The catalysed reaction is L-methionine + ATP + H2O = S-adenosyl-L-methionine + phosphate + diphosphate. It functions in the pathway amino-acid biosynthesis; S-adenosyl-L-methionine biosynthesis; S-adenosyl-L-methionine from L-methionine: step 1/1. Its function is as follows. Catalyzes the formation of S-adenosylmethionine from methionine and ATP. The reaction comprises two steps that are both catalyzed by the same enzyme: formation of S-adenosylmethionine (AdoMet) and triphosphate, and subsequent hydrolysis of the triphosphate. The protein is S-adenosylmethionine synthase (METK-1) of Ostreococcus lucimarinus (strain CCE9901).